The primary structure comprises 414 residues: tRNA (guanine-N(7)-)-methyltransferase non-catalytic subunit WDR4 (414 aa).

Alanine 2 carries the post-translational modification N-acetylalanine. 4 WD repeats span residues glutamine 60 to valine 99, threonine 101 to arginine 140, glycine 144 to phenylalanine 184, and glycine 187 to cysteine 227. The interval glutamate 377–serine 414 is disordered.

This sequence belongs to the WD repeat TRM82 family. As to quaternary structure, non-catalytic component of the METTL1-WDR4 complex, composed of METTL1 and WDR4. Interacts with FEN1; the interaction is direct.

The protein resides in the nucleus. The protein localises to the chromosome. Its pathway is tRNA modification; N(7)-methylguanine-tRNA biosynthesis. In terms of biological role, non-catalytic component of the METTL1-WDR4 methyltransferase complex required for the formation of N(7)-methylguanine in a subset of RNA species, such as tRNAs, mRNAs and microRNAs (miRNAs). In the METTL1-WDR4 methyltransferase complex, WDR4 acts as a scaffold for tRNA-binding. Required for the formation of N(7)-methylguanine at position 46 (m7G46) in a large subset of tRNAs that contain the 5'-RAGGU-3' motif within the variable loop. M7G46 interacts with C13-G22 in the D-loop to stabilize tRNA tertiary structure and protect tRNAs from decay. Also required for the formation of N(7)-methylguanine at internal sites in a subset of mRNAs. Also required for methylation of a specific subset of miRNAs, such as let-7. Independently of METTL1, also plays a role in genome stability: localizes at the DNA replication site and regulates endonucleolytic activities of FEN1. This chain is tRNA (guanine-N(7)-)-methyltransferase non-catalytic subunit WDR4, found in Bos taurus (Bovine).